A 185-amino-acid chain; its full sequence is ATP synthase subunit b, chloroplastic (185 aa).

The chain crosses the membrane as a helical span at residues 31–49 (LINSGVVLGLPVYSGKGVL).

This sequence belongs to the ATPase B chain family. As to quaternary structure, F-type ATPases have 2 components, F(1) - the catalytic core - and F(0) - the membrane proton channel. F(1) has five subunits: alpha(3), beta(3), gamma(1), delta(1), epsilon(1). F(0) has four main subunits: a(1), b(1), b'(1) and c(10-14). The alpha and beta chains form an alternating ring which encloses part of the gamma chain. F(1) is attached to F(0) by a central stalk formed by the gamma and epsilon chains, while a peripheral stalk is formed by the delta, b and b' chains.

Its subcellular location is the plastid. The protein resides in the chloroplast thylakoid membrane. Functionally, f(1)F(0) ATP synthase produces ATP from ADP in the presence of a proton or sodium gradient. F-type ATPases consist of two structural domains, F(1) containing the extramembraneous catalytic core and F(0) containing the membrane proton channel, linked together by a central stalk and a peripheral stalk. During catalysis, ATP synthesis in the catalytic domain of F(1) is coupled via a rotary mechanism of the central stalk subunits to proton translocation. Component of the F(0) channel, it forms part of the peripheral stalk, linking F(1) to F(0). The chain is ATP synthase subunit b, chloroplastic from Huperzia lucidula (Shining clubmoss).